A 24-amino-acid polypeptide reads, in one-letter code: Brevinin-1Pc (24 aa).

A disulfide bridge connects residues cysteine 18 and cysteine 24.

As to expression, expressed by the skin glands.

It localises to the secreted. In terms of biological role, antibacterial activity against Gram-positive bacterium S.aureus and Gram-negative bacterium E.coli. Has activity against C.albicans. The polypeptide is Brevinin-1Pc (Lithobates pipiens (Northern leopard frog)).